Here is a 235-residue protein sequence, read N- to C-terminus: Probable transglycosylase SceD (235 aa).

The N-terminal stretch at 1 to 26 (MKKTIIASSLAVGLGVVAGNAGHADA) is a signal peptide. The disordered stretch occupies residues 90–159 (QQDVSAQAST…NASSGSSVNV (70 aa)). Residues 99–110 (TVSNQTSAEQVG) show a composition bias toward polar residues. Positions 111–159 (SQQQSSQAQPTQTQQAPQTEQTQQPQTEATTSNSSSSNNNASSGSSVNV) are enriched in low complexity.

Belongs to the transglycosylase family. SceD subfamily.

It is found in the secreted. In terms of biological role, is able to cleave peptidoglycan and affects clumping and separation of bacterial cells. This is Probable transglycosylase SceD (sceD) from Staphylococcus haemolyticus (strain JCSC1435).